We begin with the raw amino-acid sequence, 217 residues long: Adenylate kinase (217 aa).

10–15 (GSGKGT) contributes to the ATP binding site. The NMP stretch occupies residues 30–59 (STGDLLRAAVAAGSELGKQAKAAMDAGELV). AMP contacts are provided by residues Thr-31, Arg-36, 57–59 (ELV), 85–88 (GFPR), and Gln-92. The segment at 126–164 (GRRTCQACGAIYNIYFSPPEVDHRCDKCNSDQLVQRSDD) is LID. Arg-127 lines the ATP pocket. Residues Cys-130 and Cys-133 each coordinate Zn(2+). 136-137 (IY) contributes to the ATP binding site. Zn(2+) contacts are provided by Cys-150 and Cys-153. Arg-161 and Arg-172 together coordinate AMP. Position 200 (Asp-200) interacts with ATP.

It belongs to the adenylate kinase family. In terms of assembly, monomer.

It localises to the cytoplasm. It catalyses the reaction AMP + ATP = 2 ADP. Its pathway is purine metabolism; AMP biosynthesis via salvage pathway; AMP from ADP: step 1/1. In terms of biological role, catalyzes the reversible transfer of the terminal phosphate group between ATP and AMP. Plays an important role in cellular energy homeostasis and in adenine nucleotide metabolism. This is Adenylate kinase from Nitrosococcus oceani (strain ATCC 19707 / BCRC 17464 / JCM 30415 / NCIMB 11848 / C-107).